Consider the following 366-residue polypeptide: sn-glycerol-3-phosphate import ATP-binding protein UgpC (366 aa).

The ABC transporter domain occupies 4–235 (LSLRNVQKTY…PASTFVAGFI (232 aa)). 37 to 44 (GPSGCGKS) is a binding site for ATP.

It belongs to the ABC transporter superfamily. sn-glycerol-3-phosphate importer (TC 3.A.1.1.3) family. As to quaternary structure, the complex is composed of two ATP-binding proteins (UgpC), two transmembrane proteins (UgpA and UgpE) and a solute-binding protein (UgpB).

The protein localises to the cell inner membrane. It catalyses the reaction sn-glycerol 3-phosphate(out) + ATP + H2O = sn-glycerol 3-phosphate(in) + ADP + phosphate + H(+). Its function is as follows. Part of the ABC transporter complex UgpBAEC involved in sn-glycerol-3-phosphate (G3P) import. Responsible for energy coupling to the transport system. The chain is sn-glycerol-3-phosphate import ATP-binding protein UgpC from Cupriavidus necator (strain ATCC 17699 / DSM 428 / KCTC 22496 / NCIMB 10442 / H16 / Stanier 337) (Ralstonia eutropha).